The chain runs to 95 residues: Co-chaperonin GroES (95 aa).

The protein belongs to the GroES chaperonin family. As to quaternary structure, heptamer of 7 subunits arranged in a ring. Interacts with the chaperonin GroEL.

Its subcellular location is the cytoplasm. Its function is as follows. Together with the chaperonin GroEL, plays an essential role in assisting protein folding. The GroEL-GroES system forms a nano-cage that allows encapsulation of the non-native substrate proteins and provides a physical environment optimized to promote and accelerate protein folding. GroES binds to the apical surface of the GroEL ring, thereby capping the opening of the GroEL channel. The chain is Co-chaperonin GroES from Rickettsia conorii (strain ATCC VR-613 / Malish 7).